We begin with the raw amino-acid sequence, 205 residues long: Ferritin heavy chain (205 aa).

The N-terminal stretch at 1–19 (MVKLIASLLLLAVVAQAYG) is a signal peptide. The region spanning 35–190 (VDMKDACIKG…GKLTTLKKMM (156 aa)) is the Ferritin-like diiron domain. Residues Cys-41 and Cys-150 are joined by a disulfide bond. Fe cation is bound by residues Glu-52, Glu-87, His-90, Glu-136, and Gln-172.

Belongs to the ferritin family. Oligomer of 12 light (L) chains and 12 heavy (H) chains; L and H chains are disulfide-linked. The functional molecule forms a roughly spherical shell with a diameter of 12 nm and contains a central cavity into which the insoluble ferric iron core is deposited. As to expression, expressed in hemolymph and gut (at protein level). Expressed in the head (at protein level). Expressed in thorax and abdomen.

It localises to the golgi apparatus. The protein localises to the secreted. It carries out the reaction 4 Fe(2+) + O2 + 4 H(+) = 4 Fe(3+) + 2 H2O. In terms of biological role, stores iron in a soluble, non-toxic, readily available form. Important for iron homeostasis. Iron is taken up in the ferrous form and deposited as ferric hydroxides after oxidation. Ferritin is composed of a heavy (H) chain which is responsible for the oxidation and uptake of ferrous iron, and a light (L) chain which facilitates the nucleation of the ferrihydrite iron core. Required for dietary iron absorption in the midgut. Involved in tissue iron detoxification by exporting excess iron. Functions as an antioxidant and protects the developing organs from cell-mediated ferroptosis. Required for embryo and larval development. Plays a role in blood cell (haemocyte) differentiation in the lymph gland at the larval stage. May also store Zn(2+) and Mn(2+) and thus may play a role in zinc and manganese homeostasis. This Drosophila melanogaster (Fruit fly) protein is Ferritin heavy chain.